Consider the following 285-residue polypeptide: ATP phosphoribosyltransferase (285 aa).

The protein belongs to the ATP phosphoribosyltransferase family. Long subfamily. Mg(2+) is required as a cofactor.

Its subcellular location is the cytoplasm. The catalysed reaction is 1-(5-phospho-beta-D-ribosyl)-ATP + diphosphate = 5-phospho-alpha-D-ribose 1-diphosphate + ATP. Its pathway is amino-acid biosynthesis; L-histidine biosynthesis; L-histidine from 5-phospho-alpha-D-ribose 1-diphosphate: step 1/9. With respect to regulation, feedback inhibited by histidine. In terms of biological role, catalyzes the condensation of ATP and 5-phosphoribose 1-diphosphate to form N'-(5'-phosphoribosyl)-ATP (PR-ATP). Has a crucial role in the pathway because the rate of histidine biosynthesis seems to be controlled primarily by regulation of HisG enzymatic activity. The chain is ATP phosphoribosyltransferase from Sulfolobus acidocaldarius (strain ATCC 33909 / DSM 639 / JCM 8929 / NBRC 15157 / NCIMB 11770).